Consider the following 1249-residue polypeptide: ATP-dependent helicase/nuclease subunit A (1249 aa).

The region spanning Thr5 to Val482 is the UvrD-like helicase ATP-binding domain. Ala26–Thr33 contributes to the ATP binding site. The UvrD-like helicase C-terminal domain occupies Ala521–Gly811.

This sequence belongs to the helicase family. AddA subfamily. Heterodimer of AddA and AddB/RexB. Mg(2+) is required as a cofactor.

It catalyses the reaction Couples ATP hydrolysis with the unwinding of duplex DNA by translocating in the 3'-5' direction.. It carries out the reaction ATP + H2O = ADP + phosphate + H(+). In terms of biological role, the heterodimer acts as both an ATP-dependent DNA helicase and an ATP-dependent, dual-direction single-stranded exonuclease. Recognizes the chi site generating a DNA molecule suitable for the initiation of homologous recombination. The AddA nuclease domain is required for chi fragment generation; this subunit has the helicase and 3' -&gt; 5' nuclease activities. This Lactiplantibacillus plantarum (strain ATCC BAA-793 / NCIMB 8826 / WCFS1) (Lactobacillus plantarum) protein is ATP-dependent helicase/nuclease subunit A.